We begin with the raw amino-acid sequence, 64 residues long: Large ribosomal subunit protein bL35 (64 aa).

The protein belongs to the bacterial ribosomal protein bL35 family.

The chain is Large ribosomal subunit protein bL35 from Mycoplasmopsis pulmonis (strain UAB CTIP) (Mycoplasma pulmonis).